A 640-amino-acid polypeptide reads, in one-letter code: Glycosyltransferase-like protein gnt14 (640 aa).

Topologically, residues 1-14 are cytoplasmic; the sequence is MFGFKTTKNKKRVR. Residues 15-35 form a helical; Signal-anchor for type II membrane protein membrane-spanning segment; sequence LLVVAIGVMIFFMCLSNFSSI. Residues 36 to 640 lie on the Extracellular side of the membrane; that stretch reads QSRQSSSTDT…TENCYSNDHW (605 aa). 2 disordered regions span residues 63–184 and 254–277; these read PSIN…PLSS and NSNNNNNNNNNNNNNNNNNNNNNY. Over residues 65 to 171 the composition is skewed to low complexity; the sequence is ININNSENNI…NININNNNKP (107 aa). N-linked (GlcNAc...) asparagine glycosylation occurs at N68. N-linked (GlcNAc...) asparagine glycosylation is found at N410 and N539.

It belongs to the glycosyltransferase 8 family. Highly divergent.

It is found in the membrane. This is Glycosyltransferase-like protein gnt14 (gnt14) from Dictyostelium discoideum (Social amoeba).